The sequence spans 378 residues: Acetylornithine deacetylase (378 aa).

His-76 serves as a coordination point for Zn(2+). Asp-78 is an active-site residue. Asp-108 provides a ligand contact to Zn(2+). Glu-140 is an active-site residue. Zn(2+) contacts are provided by Glu-141, Glu-165, and His-351.

The protein belongs to the peptidase M20A family. ArgE subfamily. As to quaternary structure, homodimer. Zn(2+) serves as cofactor. It depends on Co(2+) as a cofactor. The cofactor is glutathione.

The protein localises to the cytoplasm. The catalysed reaction is N(2)-acetyl-L-ornithine + H2O = L-ornithine + acetate. It functions in the pathway amino-acid biosynthesis; L-arginine biosynthesis; L-ornithine from N(2)-acetyl-L-ornithine (linear): step 1/1. Functionally, catalyzes the hydrolysis of the amide bond of N(2)-acetylated L-amino acids. Cleaves the acetyl group from N-acetyl-L-ornithine to form L-ornithine, an intermediate in L-arginine biosynthesis pathway, and a branchpoint in the synthesis of polyamines. The protein is Acetylornithine deacetylase of Vibrio cholerae serotype O1 (strain ATCC 39541 / Classical Ogawa 395 / O395).